Reading from the N-terminus, the 188-residue chain is Large ribosomal subunit protein eL18 (188 aa).

Positions G153–N188 are disordered. 2 stretches are compositionally biased toward basic residues: residues S161 to G171 and R178 to N188.

The protein belongs to the eukaryotic ribosomal protein eL18 family. Component of the large ribosomal subunit.

It localises to the cytoplasm. The protein localises to the cytosol. Its subcellular location is the rough endoplasmic reticulum. Component of the large ribosomal subunit. The ribosome is a large ribonucleoprotein complex responsible for the synthesis of proteins in the cell. This Ictalurus punctatus (Channel catfish) protein is Large ribosomal subunit protein eL18 (rpl18).